A 396-amino-acid polypeptide reads, in one-letter code: Tyrosine--tRNA ligase (396 aa).

The short motif at Pro-43–His-52 is the 'HIGH' region element. The 'KMSKS' region signature appears at Lys-227–Ser-231. Lys-230 is a binding site for ATP. In terms of domain architecture, S4 RNA-binding spans Ile-335–Val-395.

The protein belongs to the class-I aminoacyl-tRNA synthetase family. TyrS type 2 subfamily. As to quaternary structure, homodimer.

It is found in the cytoplasm. It carries out the reaction tRNA(Tyr) + L-tyrosine + ATP = L-tyrosyl-tRNA(Tyr) + AMP + diphosphate + H(+). Functionally, catalyzes the attachment of tyrosine to tRNA(Tyr) in a two-step reaction: tyrosine is first activated by ATP to form Tyr-AMP and then transferred to the acceptor end of tRNA(Tyr). The polypeptide is Tyrosine--tRNA ligase (Haemophilus ducreyi (strain 35000HP / ATCC 700724)).